A 715-amino-acid polypeptide reads, in one-letter code: Protein Hook homolog 1 (715 aa).

The 117-residue stretch at 6 to 122 (TVLCESLIIW…RLLQLILGCA (117 aa)) folds into the Calponin-homology (CH) domain. 2 coiled-coil regions span residues 167–434 (AGDT…DQLL) and 463–656 (IRLQ…EEKL).

The protein belongs to the hook family. As to quaternary structure, interacts with microtubules.

Its subcellular location is the cytoplasm. The protein localises to the cytoskeleton. Its function is as follows. May function to promote vesicle trafficking and/or fusion. This chain is Protein Hook homolog 1 (hook1), found in Danio rerio (Zebrafish).